The primary structure comprises 315 residues: Melanocyte-stimulating hormone receptor (315 aa).

Topologically, residues Met-1–Tyr-35 are extracellular. N-linked (GlcNAc...) asparagine glycans are attached at residues Asn-17 and Asn-27. A helical membrane pass occupies residues Val-36–Ile-61. Over Thr-62–Pro-70 the chain is Cytoplasmic. The helical transmembrane segment at Met-71–Leu-91 threads the bilayer. At Glu-92–Asn-116 the chain is on the extracellular side. Residues Leu-117–Ile-138 form a helical membrane-spanning segment. The Cytoplasmic portion of the chain corresponds to Asp-139–Arg-161. Residues Ala-162–Tyr-181 traverse the membrane as a helical segment. Topologically, residues Lys-182–Cys-189 are extracellular. The chain crosses the membrane as a helical span at residues Leu-190–Phe-209. Residues Thr-210–Ala-238 are Cytoplasmic-facing. The chain crosses the membrane as a helical span at residues Ala-239 to Leu-264. The Extracellular portion of the chain corresponds to Cys-265–Asn-277. The helical transmembrane segment at Phe-278 to Phe-298 threads the bilayer. Residues Arg-299–Trp-315 are Cytoplasmic-facing. Residue Cys-313 is the site of S-palmitoyl cysteine attachment.

Belongs to the G-protein coupled receptor 1 family. As to quaternary structure, interacts with MGRN1, but does not undergo MGRN1-mediated ubiquitination; this interaction competes with GNAS-binding and thus inhibits agonist-induced cAMP production. Interacts with OPN3; the interaction results in a decrease in MC1R-mediated cAMP signaling and ultimately a decrease in melanin production in melanocytes.

The protein localises to the cell membrane. In terms of biological role, receptor for MSH (alpha, beta and gamma) and ACTH. The activity of this receptor is mediated by G proteins which activate adenylate cyclase. Mediates melanogenesis, the production of eumelanin (black/brown) and phaeomelanin (red/yellow), via regulation of cAMP signaling in melanocytes. In Mus musculus (Mouse), this protein is Melanocyte-stimulating hormone receptor (Mc1r).